The primary structure comprises 298 residues: Probable endonuclease 4 (298 aa).

Residues His-69, His-111, Glu-146, Asp-180, His-183, His-215, Asp-228, His-230, and Glu-260 each coordinate Zn(2+).

This sequence belongs to the AP endonuclease 2 family. Zn(2+) serves as cofactor.

It carries out the reaction Endonucleolytic cleavage to 5'-phosphooligonucleotide end-products.. Its function is as follows. Endonuclease IV plays a role in DNA repair. It cleaves phosphodiester bonds at apurinic or apyrimidinic (AP) sites, generating a 3'-hydroxyl group and a 5'-terminal sugar phosphate. The protein is Probable endonuclease 4 of Bacillus cereus (strain G9842).